A 388-amino-acid polypeptide reads, in one-letter code: LL-diaminopimelate aminotransferase (388 aa).

Residues Tyr-16 and Gly-41 each coordinate substrate. Pyridoxal 5'-phosphate is bound by residues Tyr-70, 104–105 (SK), Tyr-129, Asn-179, Tyr-210, and 239–241 (SLS). Substrate-binding residues include Lys-105, Tyr-129, and Asn-179. Lys-242 carries the post-translational modification N6-(pyridoxal phosphate)lysine. Pyridoxal 5'-phosphate is bound at residue Arg-250. Arg-368 contributes to the substrate binding site.

It belongs to the class-I pyridoxal-phosphate-dependent aminotransferase family. LL-diaminopimelate aminotransferase subfamily. In terms of assembly, homodimer. It depends on pyridoxal 5'-phosphate as a cofactor.

The enzyme catalyses (2S,6S)-2,6-diaminopimelate + 2-oxoglutarate = (S)-2,3,4,5-tetrahydrodipicolinate + L-glutamate + H2O + H(+). It functions in the pathway amino-acid biosynthesis; L-lysine biosynthesis via DAP pathway; LL-2,6-diaminopimelate from (S)-tetrahydrodipicolinate (aminotransferase route): step 1/1. In terms of biological role, involved in the synthesis of meso-diaminopimelate (m-DAP or DL-DAP), required for both lysine and peptidoglycan biosynthesis. Catalyzes the direct conversion of tetrahydrodipicolinate to LL-diaminopimelate. This is LL-diaminopimelate aminotransferase from Oleidesulfovibrio alaskensis (strain ATCC BAA-1058 / DSM 17464 / G20) (Desulfovibrio alaskensis).